A 1271-amino-acid chain; its full sequence is Protein flightless-1 homolog (1271 aa).

At Met-1 the chain carries N-acetylmethionine. An interaction with LRRFIP1 and LRRFIP2 region spans residues 1–427 (MEATGVLPFV…SGSKDPLARK (427 aa)). LRR repeat units lie at residues 7–32 (LPFV…VKAM), 33–55 (TSLR…LAAL), 56–78 (QKLE…LSSL), 80–103 (SLRA…IFKL), 104–126 (DDLS…LENA), 127–149 (KNML…LFIN), 150–173 (LTDL…MRRL), 175–196 (HLQT…QLPA), 197–222 (MMAL…LEGL), 223–245 (SNLS…LYTL), 247–268 (SLRR…IDQW), 269–291 (VHLE…ICKL), 293–316 (KLKK…IGKL), 317–339 (TSLE…LCRC), 340–363 (PKLK…HFLT), and 365–385 (IQVL…PADR). An N6-acetyllysine modification is found at Lys-21. Residue Ser-406 is modified to Phosphoserine. The residue at position 436 (Ser-436) is a Phosphoserine; by SGK3. Positions 495–827 (VGQLPGLTIW…VVSRSLEGTE (333 aa)) are interaction with ACTL6A. 3 Gelsolin-like repeats span residues 509–591 (FVPV…EEFL), 629–703 (NIKL…PGFW), and 759–831 (LMPG…AQVF). A Phosphoserine modification is found at Ser-860. Positions 951–977 (KTEDKEGKASAEAREGEEAAAEAEEKQ) are disordered. Residues 952 to 967 (TEDKEGKASAEAREGE) show a composition bias toward basic and acidic residues. Acidic residues predominate over residues 968 to 977 (EAAAEAEEKQ). A Gelsolin-like 4 repeat occupies 1183-1256 (KCSDFCQDDL…VRKGNEQRAF (74 aa)).

As to quaternary structure, interacts with actin, ACTL6A and NCOA2. Interacts with CARM1. Interacts with LRRFIP1, LRRFIP2 and MYD88. Upon LPS stimulation, LRRFIP2 competes for MYD88-binding; LRRFIP1 constitutively blocks the interaction with MyD88, even in the absence of LPS. Interacts with the nuclear receptors ESR1 and THRB. Interacts with SGK3. Interacts (via the gelsolin-like region) with TMOD1 and TMOD3. Interacts with LMOD2, VCL, GSN and DES. As to expression, expressed in blastocyst.

It is found in the nucleus. It localises to the cytoplasm. Its subcellular location is the cytoskeleton. The protein localises to the microtubule organizing center. The protein resides in the centrosome. It is found in the cell junction. It localises to the focal adhesion. Its subcellular location is the cell projection. The protein localises to the podosome. Is a regulator of actin polymerization, required for proper myofibril organization and regulation of the length of sarcomeric thin filaments. It also plays a role in the assembly of cardiomyocyte cell adhesion complexes. Regulates cytoskeletal rearrangements involved in cytokinesis and cell migration, by inhibiting Rac1-dependent paxillin phosphorylation. May play a role as coactivator in transcriptional activation by hormone-activated nuclear receptors (NR) and acts in cooperation with NCOA2 and CARM1. Involved in estrogen hormone signaling. This chain is Protein flightless-1 homolog (Flii), found in Mus musculus (Mouse).